Consider the following 127-residue polypeptide: Glycine cleavage system H protein (127 aa).

Residues Thr-24 to Lys-105 enclose the Lipoyl-binding domain. Lys-65 bears the N6-lipoyllysine mark.

The protein belongs to the GcvH family. As to quaternary structure, the glycine cleavage system is composed of four proteins: P, T, L and H. It depends on (R)-lipoate as a cofactor.

The glycine cleavage system catalyzes the degradation of glycine. The H protein shuttles the methylamine group of glycine from the P protein to the T protein. The polypeptide is Glycine cleavage system H protein (Azoarcus sp. (strain BH72)).